A 296-amino-acid polypeptide reads, in one-letter code: Probable lipid kinase YegS-like (296 aa).

One can recognise a DAGKc domain in the interval Met1–His130. Residues Thr37, Gly63–Glu69, and Thr92 contribute to the ATP site. The Mg(2+) site is built by Leu212, Asp215, and Leu217. The Proton acceptor role is filled by Glu268.

It belongs to the diacylglycerol/lipid kinase family. YegS lipid kinase subfamily. Requires Mg(2+) as cofactor. Ca(2+) serves as cofactor.

Its subcellular location is the cytoplasm. In terms of biological role, probably phosphorylates lipids; the in vivo substrate is unknown. The polypeptide is Probable lipid kinase YegS-like (Yersinia pseudotuberculosis serotype I (strain IP32953)).